A 1487-amino-acid chain; its full sequence is Murinoglobulin-1 (1487 aa).

The first 24 residues, 1–24 (MKKNREAQLCLFSALLAFLPFASL), serve as a signal peptide directing secretion. The cysteines at positions 48 and 86 are disulfide-linked. N-linked (GlcNAc...) asparagine glycosylation is found at asparagine 55 and asparagine 247. 2 cysteine pairs are disulfide-bonded: cysteine 251–cysteine 283 and cysteine 269–cysteine 295. N-linked (GlcNAc...) asparagine glycosylation is found at asparagine 301, asparagine 321, asparagine 393, and asparagine 508. Cystine bridges form between cysteine 468/cysteine 563, cysteine 595/cysteine 784, and cysteine 643/cysteine 689. The interval 686–745 (PTYCYEMNMVVLSAPAVESELSPRGGEFEMMPLGVNKSPLPKEPPRKDPPPKDPVIETIR) is bait region. N-linked (GlcNAc...) asparagine glycosylation is found at asparagine 760, asparagine 787, and asparagine 882. 4 disulfides stabilise this stretch: cysteine 860-cysteine 896, cysteine 934-cysteine 1334, cysteine 1092-cysteine 1140, and cysteine 1365-cysteine 1480. The segment at residues 985-988 (CGEQ) is a cross-link (isoglutamyl cysteine thioester (Cys-Gln)). The N-linked (GlcNAc...) asparagine glycan is linked to asparagine 1004. 3 N-linked (GlcNAc...) asparagine glycosylation sites follow: asparagine 1153, asparagine 1324, and asparagine 1437.

It belongs to the protease inhibitor I39 (alpha-2-macroglobulin) family. As to quaternary structure, monomer. As to expression, plasma.

It is found in the secreted. In terms of biological role, a proteinase activates the inhibitor by specific proteolysis in the bait region, which, by an unknown mechanism leads to reaction at the cysteinyl-glutamyl internal thiol ester site and to a conformational change, whereby the proteinase is trapped and/or covalently bound to the inhibitor. While in the tetrameric proteinase inhibitors steric inhibition is sufficiently strong, monomeric forms need a covalent linkage between the activated glutamyl residue of the original thiol ester and a terminal amino group of a lysine or another nucleophilic group on the proteinase, for inhibition to be effective. The chain is Murinoglobulin-1 from Rattus norvegicus (Rat).